Here is a 415-residue protein sequence, read N- to C-terminus: Very late expression factor 1 (415 aa).

The Tyr recombinase domain maps to 171-357 (REIINTILDC…DESDDNDEDD (187 aa)). Residues arginine 214, lysine 242, arginine 307, and histidine 330 contribute to the active site. The disordered stretch occupies residues 339–415 (YLNKYDVGVD…GDDADLLSFN (77 aa)). Tyrosine 343 serves as the catalytic O-(3'-phospho-DNA)-tyrosine intermediate. A compositionally biased stretch (acidic residues) spans 346 to 363 (GVDESDDNDEDDDDDEND). The span at 375–404 (NISNYDINNSSSGNSSSNNTSGNDFNNNIS) shows a compositional bias: low complexity.

The protein belongs to the 'phage' integrase family.

Functionally, involved in very late gene activation. This Heliothis zea nuclear polyhedrosis virus (HzSNPV) protein is Very late expression factor 1 (VLF-1).